A 125-amino-acid chain; its full sequence is Plastocyanin (125 aa).

A signal peptide spans 1–34; the sequence is MKVLASFARRLSLFAVAAVLCVGSFFLSAAPASA. Positions 35-125 constitute a Plastocyanin-like domain; that stretch reads QTVAIKMGAD…AGMVGKIVVQ (91 aa). Cu cation contacts are provided by histidine 73, cysteine 110, histidine 113, and methionine 118.

The protein belongs to the plastocyanin family. Requires Cu(2+) as cofactor.

The protein localises to the cellular thylakoid membrane. Its function is as follows. Participates in electron transfer between P700 and the cytochrome b6-f complex in photosystem I. The sequence is that of Plastocyanin (petE) from Synechococcus elongatus (strain ATCC 33912 / PCC 7942 / FACHB-805) (Anacystis nidulans R2).